A 698-amino-acid chain; its full sequence is Polyphosphate kinase (698 aa).

N63 lines the ATP pocket. Mg(2+) contacts are provided by R390 and R420. H450 serves as the catalytic Phosphohistidine intermediate. The ATP site is built by Y483, R579, and H607.

This sequence belongs to the polyphosphate kinase 1 (PPK1) family. Mg(2+) serves as cofactor. In terms of processing, an intermediate of this reaction is the autophosphorylated ppk in which a phosphate is covalently linked to a histidine residue through a N-P bond.

The enzyme catalyses [phosphate](n) + ATP = [phosphate](n+1) + ADP. Functionally, catalyzes the reversible transfer of the terminal phosphate of ATP to form a long-chain polyphosphate (polyP). In Xylella fastidiosa (strain Temecula1 / ATCC 700964), this protein is Polyphosphate kinase.